Here is a 589-residue protein sequence, read N- to C-terminus: Sentrin-specific protease 2 (589 aa).

Positions 28-31 (KRRR) match the Nuclear localization signal motif. Ser32 bears the Phosphoserine mark. A Nuclear localization signal motif is present at residues 46 to 51 (PAKRPR). The segment at 71 to 382 (GFPFQLTTKP…EKEISNALGH (312 aa)) is axin-binding. Disordered regions lie at residues 148–179 (SFGF…LMWK) and 191–210 (EESG…GVQK). The short motif at 317–332 (LEPDLSEEVSARLRLG) is the Nuclear export signal element. Phosphoserine is present on residues Ser333 and Ser344. Residues 395 to 559 (LRITRGDIQT…MFTCKYADYI (165 aa)) form a protease region. Active-site residues include His478 and Asp495. Cys548 (nucleophile) is an active-site residue.

It belongs to the peptidase C48 family. In terms of assembly, binds to SUMO2 and SUMO3. Interacts with the C-terminal domain of NUP153 via its N-terminus. Interacts with MTA1. In terms of processing, polyubiquitinated; which leads to proteasomal degradation.

Its subcellular location is the nucleus. The protein localises to the nuclear pore complex. It localises to the nucleus membrane. The protein resides in the cytoplasm. Its function is as follows. Protease that catalyzes two essential functions in the SUMO pathway. The first is the hydrolysis of an alpha-linked peptide bond at the C-terminal end of the small ubiquitin-like modifier (SUMO) propeptides, SUMO1, SUMO2 and SUMO3 leading to the mature form of the proteins. The second is the deconjugation of SUMO1, SUMO2 and SUMO3 from targeted proteins, by cleaving an epsilon-linked peptide bond between the C-terminal glycine of the mature SUMO and the lysine epsilon-amino group of the target protein. May down-regulate CTNNB1 levels and thereby modulate the Wnt pathway. Deconjugates SUMO2 from MTA1. Plays a dynamic role in adipogenesis by desumoylating and promoting the stabilization of CEBPB. Acts as a regulator of the cGAS-STING pathway by catalyzing desumoylation of CGAS and STING1 during the late phase of viral infection. The polypeptide is Sentrin-specific protease 2 (SENP2) (Pongo abelii (Sumatran orangutan)).